Here is a 233-residue protein sequence, read N- to C-terminus: MFRIVKWLIALPVGIFIFFNAYVYGNIITYRAVAPHRTAFMSMRMKQFEQEGRDVALDYRWVPYNRISTNLKKALIASEDVRFAGHGGFDWDGIQNAIRRNRNSGEVKAGGSTISQQLAKNLFLNESRNYLRKGEEAAITAMMEAVTDKNRIFELYLNSIEWHYGVFGAEAASRYFYKKPAADLTKQQAAKLTALVPAPLYYADHPKSKRLRNKTNIVLRRMGSAELPESDTD.

The helical transmembrane segment at 8-28 (LIALPVGIFIFFNAYVYGNII) threads the bilayer.

This sequence belongs to the glycosyltransferase 51 family.

Its subcellular location is the cell inner membrane. It carries out the reaction [GlcNAc-(1-&gt;4)-Mur2Ac(oyl-L-Ala-gamma-D-Glu-L-Lys-D-Ala-D-Ala)](n)-di-trans,octa-cis-undecaprenyl diphosphate + beta-D-GlcNAc-(1-&gt;4)-Mur2Ac(oyl-L-Ala-gamma-D-Glu-L-Lys-D-Ala-D-Ala)-di-trans,octa-cis-undecaprenyl diphosphate = [GlcNAc-(1-&gt;4)-Mur2Ac(oyl-L-Ala-gamma-D-Glu-L-Lys-D-Ala-D-Ala)](n+1)-di-trans,octa-cis-undecaprenyl diphosphate + di-trans,octa-cis-undecaprenyl diphosphate + H(+). It functions in the pathway cell wall biogenesis; peptidoglycan biosynthesis. Peptidoglycan polymerase that catalyzes glycan chain elongation from lipid-linked precursors. This is Biosynthetic peptidoglycan transglycosylase from Neisseria gonorrhoeae (strain ATCC 700825 / FA 1090).